A 54-amino-acid chain; its full sequence is Large ribosomal subunit protein bL33 (54 aa).

It belongs to the bacterial ribosomal protein bL33 family.

The polypeptide is Large ribosomal subunit protein bL33 (Roseiflexus castenholzii (strain DSM 13941 / HLO8)).